The primary structure comprises 752 residues: Zinc finger BED domain-containing protein RICESLEEPER 3 (752 aa).

The BED-type zinc finger occupies 106–166 (RKKSVVWEHF…ASCPMLKNED (61 aa)). Positions 129, 132, 153, and 159 each coordinate Zn(2+). The segment at 647–733 (ELEQYLEEAL…EALFCAKDWL (87 aa)) is HATC (Hobo-Ac-Tam3) domain.

In terms of assembly, homodimer.

It localises to the nucleus. Functionally, transposase-like protein that is essential for plant growth and development. May regulate global gene expression by recruiting other cellular factors. The chain is Zinc finger BED domain-containing protein RICESLEEPER 3 from Oryza sativa subsp. japonica (Rice).